Consider the following 137-residue polypeptide: Methylglyoxal synthase (137 aa).

Residues 1–137 (MNIALVAHDK…KLSHNDEPPA (137 aa)) enclose the MGS-like domain. Substrate contacts are provided by residues His8, Lys12, 34–37 (TGTT), and 54–55 (SG). Residue Asp60 is the Proton donor/acceptor of the active site. His87 provides a ligand contact to substrate.

It belongs to the methylglyoxal synthase family.

The catalysed reaction is dihydroxyacetone phosphate = methylglyoxal + phosphate. Functionally, catalyzes the formation of methylglyoxal from dihydroxyacetone phosphate. In Exiguobacterium sp. (strain ATCC BAA-1283 / AT1b), this protein is Methylglyoxal synthase.